The chain runs to 117 residues: Large ribosomal subunit protein bL20 (117 aa).

It belongs to the bacterial ribosomal protein bL20 family.

Its function is as follows. Binds directly to 23S ribosomal RNA and is necessary for the in vitro assembly process of the 50S ribosomal subunit. It is not involved in the protein synthesizing functions of that subunit. This is Large ribosomal subunit protein bL20 from Acetivibrio thermocellus (strain ATCC 27405 / DSM 1237 / JCM 9322 / NBRC 103400 / NCIMB 10682 / NRRL B-4536 / VPI 7372) (Clostridium thermocellum).